The following is a 115-amino-acid chain: UPF0127 protein PH1112 (115 aa).

It belongs to the UPF0127 family.

In Pyrococcus horikoshii (strain ATCC 700860 / DSM 12428 / JCM 9974 / NBRC 100139 / OT-3), this protein is UPF0127 protein PH1112.